We begin with the raw amino-acid sequence, 166 residues long: Probable tyrosine-protein phosphatase DG1060 (166 aa).

The Tyrosine-protein phosphatase domain maps to 9-162 (NFGMVADDLY…LVTYNNAPQW (154 aa)). Cysteine 101 serves as the catalytic Phosphocysteine intermediate.

The protein belongs to the protein-tyrosine phosphatase family.

The protein resides in the cytoplasm. The catalysed reaction is O-phospho-L-tyrosyl-[protein] + H2O = L-tyrosyl-[protein] + phosphate. The chain is Probable tyrosine-protein phosphatase DG1060 (DG1060) from Dictyostelium discoideum (Social amoeba).